The chain runs to 287 residues: Polyamine aminopropyltransferase (287 aa).

Residues 5 to 238 form the PABS domain; it reads EIWYETLHAN…GIMTFAWASQ (234 aa). Position 33 (glutamine 33) interacts with S-methyl-5'-thioadenosine. Residues histidine 64 and aspartate 88 each contribute to the spermidine site. Residues glutamate 108 and 140-141 contribute to the S-methyl-5'-thioadenosine site; that span reads DG. Aspartate 158 serves as the catalytic Proton acceptor. 158–161 contacts spermidine; that stretch reads DCTD. Proline 165 is a binding site for S-methyl-5'-thioadenosine.

This sequence belongs to the spermidine/spermine synthase family. In terms of assembly, homodimer or homotetramer.

Its subcellular location is the cytoplasm. The enzyme catalyses S-adenosyl 3-(methylsulfanyl)propylamine + putrescine = S-methyl-5'-thioadenosine + spermidine + H(+). It functions in the pathway amine and polyamine biosynthesis; spermidine biosynthesis; spermidine from putrescine: step 1/1. Functionally, catalyzes the irreversible transfer of a propylamine group from the amino donor S-adenosylmethioninamine (decarboxy-AdoMet) to putrescine (1,4-diaminobutane) to yield spermidine. The chain is Polyamine aminopropyltransferase from Serratia proteamaculans (strain 568).